A 304-amino-acid chain; its full sequence is GMP synthase [glutamine-hydrolyzing] subunit B (304 aa).

The GMPS ATP-PPase domain maps to 2–183 (VKVEKFIPNA…LDLPEEICER (182 aa)). Position 28-34 (28-34 (SGGVDSS)) interacts with ATP.

As to quaternary structure, heterodimer composed of a glutamine amidotransferase subunit (A) and a GMP-binding subunit (B).

The enzyme catalyses XMP + L-glutamine + ATP + H2O = GMP + L-glutamate + AMP + diphosphate + 2 H(+). It functions in the pathway purine metabolism; GMP biosynthesis; GMP from XMP (L-Gln route): step 1/1. In terms of biological role, catalyzes the synthesis of GMP from XMP. The polypeptide is GMP synthase [glutamine-hydrolyzing] subunit B (Methanococcoides burtonii (strain DSM 6242 / NBRC 107633 / OCM 468 / ACE-M)).